The primary structure comprises 302 residues: Sulfate adenylyltransferase subunit 2 (302 aa).

The interval R280–F302 is disordered.

Belongs to the PAPS reductase family. CysD subfamily. Heterodimer composed of CysD, the smaller subunit, and CysN.

It carries out the reaction sulfate + ATP + H(+) = adenosine 5'-phosphosulfate + diphosphate. It functions in the pathway sulfur metabolism; hydrogen sulfide biosynthesis; sulfite from sulfate: step 1/3. Its function is as follows. With CysN forms the ATP sulfurylase (ATPS) that catalyzes the adenylation of sulfate producing adenosine 5'-phosphosulfate (APS) and diphosphate, the first enzymatic step in sulfur assimilation pathway. APS synthesis involves the formation of a high-energy phosphoric-sulfuric acid anhydride bond driven by GTP hydrolysis by CysN coupled to ATP hydrolysis by CysD. This is Sulfate adenylyltransferase subunit 2 from Vibrio atlanticus (strain LGP32) (Vibrio splendidus (strain Mel32)).